We begin with the raw amino-acid sequence, 328 residues long: GTP 3',8-cyclase (328 aa).

Residues 9-229 enclose the Radical SAM core domain; that stretch reads GFGRDVRYLR…DNGLNTGGPA (221 aa). A GTP-binding site is contributed by R18. Residues C25 and C29 each coordinate [4Fe-4S] cluster. Y31 contacts S-adenosyl-L-methionine. A [4Fe-4S] cluster-binding site is contributed by C32. A GTP-binding site is contributed by R60. G64 contacts S-adenosyl-L-methionine. Residue T94 participates in GTP binding. S118 contributes to the S-adenosyl-L-methionine binding site. K154 serves as a coordination point for GTP. An S-adenosyl-L-methionine-binding site is contributed by M188. C252 and C255 together coordinate [4Fe-4S] cluster. A GTP-binding site is contributed by 257–259; the sequence is RVR. Residue C269 participates in [4Fe-4S] cluster binding.

The protein belongs to the radical SAM superfamily. MoaA family. In terms of assembly, monomer and homodimer. It depends on [4Fe-4S] cluster as a cofactor.

The enzyme catalyses GTP + AH2 + S-adenosyl-L-methionine = (8S)-3',8-cyclo-7,8-dihydroguanosine 5'-triphosphate + 5'-deoxyadenosine + L-methionine + A + H(+). It participates in cofactor biosynthesis; molybdopterin biosynthesis. Catalyzes the cyclization of GTP to (8S)-3',8-cyclo-7,8-dihydroguanosine 5'-triphosphate. In Rhodobacter capsulatus (Rhodopseudomonas capsulata), this protein is GTP 3',8-cyclase.